A 112-amino-acid chain; its full sequence is Nitrogenase-stabilizing/protective protein NifW (112 aa).

Belongs to the NifW family. As to quaternary structure, homotrimer; associates with NifD.

Functionally, may protect the nitrogenase Fe-Mo protein from oxidative damage. This chain is Nitrogenase-stabilizing/protective protein NifW, found in Burkholderia vietnamiensis (strain G4 / LMG 22486) (Burkholderia cepacia (strain R1808)).